Reading from the N-terminus, the 332-residue chain is Glycerol-3-phosphate dehydrogenase [NAD(P)+] (332 aa).

The NADPH site is built by W11, R30, and K108. K108, G137, and S139 together coordinate sn-glycerol 3-phosphate. NADPH is bound at residue A141. K192, D245, S255, R256, and N257 together coordinate sn-glycerol 3-phosphate. The Proton acceptor role is filled by K192. R256 serves as a coordination point for NADPH. NADPH-binding residues include V280 and E282.

The protein belongs to the NAD-dependent glycerol-3-phosphate dehydrogenase family.

It localises to the cytoplasm. The enzyme catalyses sn-glycerol 3-phosphate + NAD(+) = dihydroxyacetone phosphate + NADH + H(+). The catalysed reaction is sn-glycerol 3-phosphate + NADP(+) = dihydroxyacetone phosphate + NADPH + H(+). It participates in membrane lipid metabolism; glycerophospholipid metabolism. Catalyzes the reduction of the glycolytic intermediate dihydroxyacetone phosphate (DHAP) to sn-glycerol 3-phosphate (G3P), the key precursor for phospholipid synthesis. The polypeptide is Glycerol-3-phosphate dehydrogenase [NAD(P)+] (Burkholderia ambifaria (strain MC40-6)).